A 341-amino-acid polypeptide reads, in one-letter code: Ubiquinone biosynthesis protein COQ4, mitochondrial (341 aa).

The N-terminal 16 residues, 1–16 (MLSRISSVRIGTQVRQ), are a transit peptide targeting the mitochondrion. Residues His-220, Asp-221, His-224, and Glu-236 each coordinate Zn(2+).

It belongs to the COQ4 family. As to quaternary structure, component of a multi-subunit COQ enzyme complex, composed of at least COQ3, COQ4, COQ5, COQ6, COQ7 and COQ9. Zn(2+) is required as a cofactor.

The protein resides in the mitochondrion inner membrane. The catalysed reaction is a 4-hydroxy-3-methoxy-5-(all-trans-polyprenyl)benzoate + H(+) = a 2-methoxy-6-(all-trans-polyprenyl)phenol + CO2. It functions in the pathway cofactor biosynthesis; ubiquinone biosynthesis. Functionally, lyase that catalyzes the C1-decarboxylation of 4-hydroxy-3-methoxy-5-(all-trans-polyprenyl)benzoic acid into 2-methoxy-6-(all-trans-polyprenyl)phenol during ubiquinone biosynthesis. The protein is Ubiquinone biosynthesis protein COQ4, mitochondrial of Vanderwaltozyma polyspora (strain ATCC 22028 / DSM 70294 / BCRC 21397 / CBS 2163 / NBRC 10782 / NRRL Y-8283 / UCD 57-17) (Kluyveromyces polysporus).